The following is a 27-amino-acid chain: Superoxide dismutase [Mn] (27 aa).

It belongs to the iron/manganese superoxide dismutase family. As to quaternary structure, homodimer. Mn(2+) is required as a cofactor.

It carries out the reaction 2 superoxide + 2 H(+) = H2O2 + O2. In terms of biological role, destroys superoxide anion radicals which are normally produced within the cells and which are toxic to biological systems. This Desulfovibrio desulfuricans protein is Superoxide dismutase [Mn] (sodA).